We begin with the raw amino-acid sequence, 303 residues long: T-box protein 38 (303 aa).

Positions 14–195 (LSTPEIWEEF…HNKFASGFRS (182 aa)) form a DNA-binding region, T-box. Residues 193–225 (FRSNGKRRLSSDSENSENSPPKRSKLVTPPTIS) are disordered. The segment covering 204–213 (DSENSENSPP) has biased composition (low complexity).

The protein localises to the nucleus. In terms of biological role, transcription factor. Required for mesodermal induction, acting redundantly with transcription factor tbx-37. Together with tbx-37, acts by inducing cell fates in the AB lineage, thereby playing a role in development of the anterior pharynx. In Caenorhabditis elegans, this protein is T-box protein 38 (tbx-38).